Here is a 291-residue protein sequence, read N- to C-terminus: uncharacterized protein (291 aa).

The disordered stretch occupies residues 77-140; the sequence is TVPQSSPTAI…PPTPVVEKSP (64 aa). The segment covering 125–134 has biased composition (pro residues); it reads PVTPAHPPTP.

This is an uncharacterized protein from Synechocystis sp. (strain ATCC 27184 / PCC 6803 / Kazusa).